The sequence spans 165 residues: Iron sulfur cluster assembly protein 1, mitochondrial (165 aa).

The transit peptide at 1-27 directs the protein to the mitochondrion; that stretch reads MLPVITRFARPALMAIRPVNAMGVLRA. The segment at 132 to 136 is SSQ1 binding region; that stretch reads LPPVK.

This sequence belongs to the NifU family. In terms of assembly, homodimer, but can exist as monomers or trimers. Oligomerization may be regulated by Zn(2+) availability. Component of the core Fe-S cluster (ISC) assembly machinery. Interacts with YFH1/frataxin with a 1 to 1 stoichiometry; the interaction is direct. Interacts with the mitochondrial co-chaperones JAC1 and SSQ1. Interacts with NFS1. Interacts with YAH1/ferredoxin; interacts with the reduced form. [2Fe-2S] cluster serves as cofactor. It depends on Zn(2+) as a cofactor.

It is found in the mitochondrion matrix. Its pathway is cofactor biosynthesis; iron-sulfur cluster biosynthesis. Scaffold protein for the de novo synthesis of iron-sulfur (Fe-S) clusters within mitochondria, which is required for maturation of both mitochondrial and cytoplasmic [2Fe-2S] and [4Fe-4S] proteins. First, a [2Fe-2S] cluster is transiently assembled on the scaffold proteins ISU1 and ISU2. In a second step, the cluster is released from ISU1/ISU2, transferred to glutaredoxin GRX5, followed by the formation of mitochondrial [2Fe-2S] proteins, the synthesis of [4Fe-4S] clusters and their target-specific insertion into the recipient apoproteins. Cluster assembly on ISU1/ISU2 depends on the function of the cysteine desulfurase complex NFS1-ISD11, which serves as the sulfur donor for cluster synthesis, the iron-binding protein frataxin (YFH1) as the putative iron donor, and the electron transfer chain comprised of ferredoxin reductase ARH1 and ferredoxin YAH1, which receive their electrons from NADH. Fe-S cluster release from ISU1/ISU2 is achieved by interaction with the Hsp70 chaperone SSQ1, assisted by the DnaJ-like co-chaperone JAC1 and the nucleotide exchange factor MGE1. ISU1 is the major isoform in yeast, while ISU2 is not detectable in cells grown to stationary phase. Also involved in production of a sulfur precursor required for thiolation of cytoplasmic tRNAs. The protein is Iron sulfur cluster assembly protein 1, mitochondrial of Saccharomyces cerevisiae (strain ATCC 204508 / S288c) (Baker's yeast).